Consider the following 168-residue polypeptide: Ribosome maturation factor RimM (168 aa).

Residues 95–168 form the PRC barrel domain; that stretch reads KEGYYWSDLI…QIMVDWELDY (74 aa).

Belongs to the RimM family. Binds ribosomal protein uS19.

Its subcellular location is the cytoplasm. In terms of biological role, an accessory protein needed during the final step in the assembly of 30S ribosomal subunit, possibly for assembly of the head region. Essential for efficient processing of 16S rRNA. May be needed both before and after RbfA during the maturation of 16S rRNA. It has affinity for free ribosomal 30S subunits but not for 70S ribosomes. In Nitrosomonas eutropha (strain DSM 101675 / C91 / Nm57), this protein is Ribosome maturation factor RimM.